The primary structure comprises 153 residues: ORM1-like protein 1 (153 aa).

The Cytoplasmic portion of the chain corresponds to Met-1 to Tyr-26. 2 helical membrane passes run Ala-27–Pro-46 and Val-47–Leu-64. Residues His-65–Lys-100 lie on the Cytoplasmic side of the membrane. Residues Phe-101–Pro-121 form a helical membrane-spanning segment. Topologically, residues Thr-122 to His-123 are extracellular. The chain crosses the membrane as a helical span at residues Phe-124 to Pro-140. The Cytoplasmic portion of the chain corresponds to Gln-141–Tyr-153.

The protein belongs to the ORM family. Ceramide-sensitive subunit of the serine palmitoyltransferase (SPT) complex, which is also composed of SPTLC1, SPTLC2/3 and SPTSSA/B. Widely expressed. Expressed in adult and fetal heart, brain, lung, liver, skeletal muscle and kidney. Expressed in adult pancreas and placenta and in fetal spleen abd thymus. Expressed at intermediate level in pancreas, placenta and brain but low in skeletal muscle and lung.

The protein resides in the endoplasmic reticulum membrane. Its function is as follows. Plays an essential role in the homeostatic regulation of sphingolipid de novo biosynthesis by modulating the activity of the serine palmitoyltransferase (SPT) in response to ceramide levels. When complexed to SPT, the binding of ceramides to its N-terminus stabilizes a conformation that block SPT substrate entry, hence preventing SPT catalytic activity. Through this mechanism, maintains ceramide levels at sufficient concentrations for the production of complex sphingolipids, but which prevents the accumulation of ceramides to levels that trigger apoptosis. The polypeptide is ORM1-like protein 1 (ORMDL1) (Homo sapiens (Human)).